We begin with the raw amino-acid sequence, 293 residues long: Acetylglutamate kinase (293 aa).

Substrate-binding positions include 65-66 (GG), Arg-87, and Asn-188.

It belongs to the acetylglutamate kinase family. ArgB subfamily.

The protein localises to the cytoplasm. The catalysed reaction is N-acetyl-L-glutamate + ATP = N-acetyl-L-glutamyl 5-phosphate + ADP. The protein operates within amino-acid biosynthesis; L-arginine biosynthesis; N(2)-acetyl-L-ornithine from L-glutamate: step 2/4. Functionally, catalyzes the ATP-dependent phosphorylation of N-acetyl-L-glutamate. In Symbiobacterium thermophilum (strain DSM 24528 / JCM 14929 / IAM 14863 / T), this protein is Acetylglutamate kinase.